A 641-amino-acid polypeptide reads, in one-letter code: Tetracycline resistance protein TetS (641 aa).

The region spanning 1–242 (MKIINIGILA…VITSKLFSPT (242 aa)) is the tr-type G domain. GTP contacts are provided by residues 10–17 (AHVDAGKT), 74–78 (DTPGH), and 128–131 (NKID).

The protein belongs to the TRAFAC class translation factor GTPase superfamily. Classic translation factor GTPase family. TetM/TetO subfamily.

Abolishes the inhibitory effect of tetracyclin on protein synthesis by a non-covalent modification of the ribosomes. The sequence is that of Tetracycline resistance protein TetS (tetS) from Listeria monocytogenes.